The chain runs to 95 residues: Scorpine-like peptide Smp76 (95 aa).

The signal sequence occupies residues 1–19; that stretch reads MNCKLTALLFLGLIVIASC. Positions 55–95 constitute a BetaSPN-type CS-alpha/beta domain; that stretch reads EFQCVANVDTLGNCKKHCAKTTGEKGYCHGTKCKCGIELSY. 3 cysteine pairs are disulfide-bonded: Cys58/Cys82, Cys68/Cys87, and Cys72/Cys89.

In terms of processing, disulfide bonds are critical for antiviral function, and their disruption inhibit viral activity. In terms of tissue distribution, expressed by the venom gland.

The protein resides in the secreted. Functionally, antibacterial peptide. Dose-dependently inhibits Dengue virus (DENV), Zika virus (ZIKV) and Hepatitis C virus (HCV) infections. Two mechanisms of action have been described by two different groups: one involving activity on extracellular particles, and the other regulating the immune system. On Dengue virus (DENV), Zika virus (ZIKV), suppress the established viral infection, similar to the effect of interferon (IFN)-beta. Mechanistically, upregulates the expression of IFN-beta by activating interferon regulatory transcription factor 3 (IRF3) phosphorylation. On HCV and DENV, acts by inactivating extra-cellular infectious particles without affecting viral replication. Shows very weak inhibition on measles virus. Is neither toxic nor hemolytic in vitro at high concentrations. The sequence is that of Scorpine-like peptide Smp76 from Scorpio palmatus (Israeli golden scorpion).